Here is a 198-residue protein sequence, read N- to C-terminus: MPMQDHKYFYLYSITNKTTEKIYVGVHKTSNLDDGYMGSGVAIKNAIKKYGIDNFYKHIIKFFESEKAMYDAEAEIVTEEFVKSKKTYNMKLGGIGGFPKHNTAGAKNGFYGKSHSRETRLKISIKSSRKRGPRGPRGKTLKMCGANNPRYGKIAPNAKSVIINGVLYKSIKIAAKALNINYSTLKGRVKAGYYKCQD.

The GIY-YIG domain occupies 7–90; the sequence is KYFYLYSITN…FVKSKKTYNM (84 aa).

It to endonucleases of group I introns of fungi and phage. Requires Mg(2+) as cofactor.

Its function is as follows. Probably involved in the movement of the endonuclease-encoding DNA. The protein is Putative endonuclease segC (segC) of Escherichia coli (Bacteriophage T4).